The following is a 580-amino-acid chain: Glutamyl-tRNA(Gln) amidotransferase subunit B-2, chloroplastic/mitochondrial (580 aa).

Low complexity-rich tracts occupy residues 20–35 and 42–59; these read RRDA…ATVS and AVST…SAAV. A disordered region spans residues 20 to 64; the sequence is RRDATAAASTSAATVSRGRRARAVSTTTTTSSSSSSSAAVDARDA.

The protein belongs to the GatB/GatE family. GatB subfamily. As to quaternary structure, subunit of the heterotrimeric GatCAB amidotransferase (AdT) complex, composed of A, B and C subunits.

The protein localises to the mitochondrion. It localises to the plastid. Its subcellular location is the chloroplast. The enzyme catalyses L-glutamyl-tRNA(Gln) + L-glutamine + ATP + H2O = L-glutaminyl-tRNA(Gln) + L-glutamate + ADP + phosphate + H(+). Its function is as follows. Allows the formation of correctly charged Gln-tRNA(Gln) through the transamidation of misacylated Glu-tRNA(Gln) in chloroplasts and mitochondria. The reaction takes place in the presence of glutamine and ATP through an activated gamma-phospho-Glu-tRNA(Gln). The chain is Glutamyl-tRNA(Gln) amidotransferase subunit B-2, chloroplastic/mitochondrial from Micromonas pusilla (strain CCMP1545) (Picoplanktonic green alga).